Consider the following 707-residue polypeptide: Transcription factor 12 (707 aa).

Positions Ala25–Gly109 are disordered. 2 stretches are compositionally biased toward polar residues: residues Pro30–Gly48 and Gly56–Phe76. Residues Ser47, Ser67, and Ser79 each carry the phosphoserine modification. Residues His81–Thr93 are compositionally biased toward basic and acidic residues. Phosphoserine is present on Ser98. Residue Lys110 forms a Glycyl lysine isopeptide (Lys-Gly) (interchain with G-Cter in SUMO2) linkage. Residues Ser116 and Ser124 each carry the phosphoserine modification. Residues Leu119–Leu140 form a leucine-zipper region. 2 disordered regions span residues Leu140–Ala222 and Phe249–Thr313. Over residues Ala144–Ser163 the composition is skewed to polar residues. A Glycyl lysine isopeptide (Lys-Gly) (interchain with G-Cter in SUMO2) cross-link involves residue Lys181. A compositionally biased stretch (low complexity) spans Ser256–Leu269. A compositionally biased stretch (polar residues) spans Val282–Pro306. Position 313 is a phosphothreonine (Thr313). Ser333 carries the phosphoserine modification. 2 disordered regions span residues Pro349 to Ser393 and His521 to Met605. The segment covering Thr352–Pro363 has biased composition (low complexity). Polar residues-rich tracts occupy residues Val364–Trp377 and Ala384–Ser393. Composition is skewed to basic and acidic residues over residues Ile543–His555 and Asp561–Val576. A Glycyl lysine isopeptide (Lys-Gly) (interchain with G-Cter in SUMO2) cross-link involves residue Lys544. Ser565 is subject to Phosphoserine. Residue Lys575 forms a Glycyl lysine isopeptide (Lys-Gly) (interchain with G-Cter in SUMO2) linkage. Thr582 is subject to Phosphothreonine. Residues Ser583 and Ser584 each carry the phosphoserine modification. Residues Pro593–Met605 show a composition bias toward basic and acidic residues. In terms of domain architecture, bHLH spans Glu602–Leu655. Glycyl lysine isopeptide (Lys-Gly) (interchain with G-Cter in SUMO2) cross-links involve residues Lys634 and Lys678. The class A specific domain stretch occupies residues Gln657–Ser680. Residues Glu675–Leu707 are disordered. Low complexity predominate over residues Pro686–Leu697. The segment covering Ser698 to Leu707 has biased composition (polar residues).

As to quaternary structure, efficient DNA binding requires dimerization with another bHLH protein. Forms homo- or heterooligomers with myogenin, E12 and ITF2 proteins. Interacts with PTF1. Interacts with RUNX1T1. Interacts with NEUROD2. Interacts with BHLHA9. In terms of tissue distribution, isoform gamma is highly expressed in lung, kidney, spleen, and is expressed at reduced levels in heart, muscle, liver, pituitary, brain and the trigeminal ganglion. The expression of isoform alpha predominates over isoform gamma in the pituitary and the brain.

The protein resides in the nucleus. Transcriptional regulator. Involved in the initiation of neuronal differentiation. Activates transcription by binding to the E box (5'-CANNTG-3'). May be involved in the functional network that regulates the development of the GnRH axis. This Rattus norvegicus (Rat) protein is Transcription factor 12 (Tcf12).